We begin with the raw amino-acid sequence, 803 residues long: Homeobox protein Wariai (803 aa).

Residues 23 to 41 are compositionally biased toward polar residues; the sequence is SDYDSYEQQYNNPTGSKQY. Positions 23–144 are disordered; it reads SDYDSYEQQY…PTPYSSNSFS (122 aa). Low complexity predominate over residues 42–124; the sequence is NNNNNNNTNT…NNNNNNNNNN (83 aa). The span at 125–138 shows a compositional bias: polar residues; sequence QHLSQSQQLSPTPY. The homeobox DNA-binding region spans 162–221; sequence SKKKRKRTSPDQLKLLEKIFMAHQHPNLNLRSQLAVELHMTARSVQIWFQNRRAKARNME. Residues 288–330 are disordered; it reads INGNMGGGGGGGGGSHNHHHHNHNHNHHNHNHNHNHNQPLSNG. The segment covering 291–302 has biased composition (gly residues); it reads NMGGGGGGGGGS. A compositionally biased stretch (basic residues) spans 303-322; sequence HNHHHHNHNHNHHNHNHNHN. ANK repeat units follow at residues 374–403, 407–436, 440–469, 474–503, 507–536, 540–569, 573–602, 606–636, and 642–671; these read KGLS…NPNI, QGNT…DPNL, EGVS…EVSV, NGET…KASV, NNRT…DMNA, DGHT…DPNI, EGYT…KLNI, NGQN…EIAA, and QGYT…SKKI. The segment at 695–760 is disordered; that stretch reads KSSNNNNSNS…PPGNKFEEDD (66 aa). Residues 696–746 show a composition bias toward low complexity; it reads SSNNNNSNSNINNINNINNINNINSQPNTNSDNNNNNNNNNFNENYSNGNN.

The protein localises to the nucleus. Functionally, putative transcription factor, that seems to be involved in anterior-posterior patterning of the slug, probably by controlling the proportions of prestalk and prespore cells. This chain is Homeobox protein Wariai (warA), found in Dictyostelium discoideum (Social amoeba).